The following is a 397-amino-acid chain: N(6)-adenosine-methyltransferase non-catalytic subunit METTL14 (397 aa).

2 disordered regions span residues 37–67 and 368–397; these read NAED…KKTP and ELLR…GRPR. Over residues 40-51 the composition is skewed to polar residues; sequence DINSSRQLNSGG. The segment covering 382–397 has biased composition (basic residues); the sequence is LRGRGRGFPRGRGRPR.

The protein belongs to the MT-A70-like family. In terms of assembly, component of the WMM complex, a N6-methyltransferase complex composed of a catalytic subcomplex, named MAC, and of an associated subcomplex, named MACOM. The MAC subcomplex is composed of Ime4/Mettl3 and Mettl14. The MACOM subcomplex is composed of fl(2)d, Flacc/Xio, Hakai, vir, and, in some cases of nito.

It is found in the nucleus. In terms of biological role, non-catalytic component of the WMM complex, a complex that mediates N6-methyladenosine (m6A) methylation of mRNAs, a modification that plays a role in the efficiency of mRNA splicing and is required for sex determination. In the heterodimer formed with Ime4/Mettl3, Mettl14 constitutes the RNA-binding scaffold that recognizes the substrate rather than the catalytic core. Required for sex determination and dosage compensation via Sxl alternative splicing: m6A methylation acts as a key regulator of Sxl pre-mRNA and promotes female-specific alternative splicing of Sxl, which determines female physiognomy. M6A methylation is also required for neuronal functions. This Drosophila melanogaster (Fruit fly) protein is N(6)-adenosine-methyltransferase non-catalytic subunit METTL14.